The chain runs to 82 residues: Putative antitoxin VapB23 (82 aa).

Putative antitoxin component of a possible type II toxin-antitoxin (TA) system. The cognate toxin is VapC23. The polypeptide is Putative antitoxin VapB23 (vapB23) (Mycobacterium tuberculosis (strain ATCC 25618 / H37Rv)).